We begin with the raw amino-acid sequence, 179 residues long: Shikimate kinase (179 aa).

15 to 20 (GAGKTS) is a binding site for ATP. Thr19 serves as a coordination point for Mg(2+). 3 residues coordinate substrate: Asp37, Arg61, and Gly83. Arg122 is an ATP binding site. A substrate-binding site is contributed by Arg142.

The protein belongs to the shikimate kinase family. Monomer. Mg(2+) is required as a cofactor.

It localises to the cytoplasm. The enzyme catalyses shikimate + ATP = 3-phosphoshikimate + ADP + H(+). The protein operates within metabolic intermediate biosynthesis; chorismate biosynthesis; chorismate from D-erythrose 4-phosphate and phosphoenolpyruvate: step 5/7. Functionally, catalyzes the specific phosphorylation of the 3-hydroxyl group of shikimic acid using ATP as a cosubstrate. The protein is Shikimate kinase of Coxiella burnetii (strain Dugway 5J108-111).